A 253-amino-acid chain; its full sequence is MDIPLICNDSALSQKAKILRKKWGFLSTQSDHFQLHLLPEYLALEQKDDPKQGLVFVDFVSGSVAHRRKFGGGKGQAIAKAIGLKPGVQVDVIDATAGLGRDAFVLASLGCNVTMIERSAVAAALLEDGLERAYLNLEIGTWMKQRMRLHFGSASEYLQHHQTGVVYLDPMFPHKKKSALVKKEMRVFQGVVGEDLDADSLLEAALNAARYRVVVKRPDYAPFLNDKKPTMSIKTKKNRFDVYVKQAMPQNKS.

S-adenosyl-L-methionine contacts are provided by residues 101–102 (RD), 117–118 (ER), and D169.

It belongs to the methyltransferase superfamily. RsmJ family.

It localises to the cytoplasm. It catalyses the reaction guanosine(1516) in 16S rRNA + S-adenosyl-L-methionine = N(2)-methylguanosine(1516) in 16S rRNA + S-adenosyl-L-homocysteine + H(+). Specifically methylates the guanosine in position 1516 of 16S rRNA. The polypeptide is Ribosomal RNA small subunit methyltransferase J (Psychromonas ingrahamii (strain DSM 17664 / CCUG 51855 / 37)).